The primary structure comprises 171 residues: Inosine/xanthosine triphosphatase (171 aa).

Residue 8-13 (TTNPAK) participates in substrate binding. Residues glutamate 38 and glutamine 68 each coordinate Mg(2+).

It belongs to the YjjX NTPase family. Homodimer. Mg(2+) is required as a cofactor. It depends on Mn(2+) as a cofactor.

It carries out the reaction XTP + H2O = XDP + phosphate + H(+). The enzyme catalyses ITP + H2O = IDP + phosphate + H(+). Functionally, phosphatase that hydrolyzes non-canonical purine nucleotides such as XTP and ITP to their respective diphosphate derivatives. Probably excludes non-canonical purines from DNA/RNA precursor pool, thus preventing their incorporation into DNA/RNA and avoiding chromosomal lesions. The polypeptide is Inosine/xanthosine triphosphatase (Citrobacter koseri (strain ATCC BAA-895 / CDC 4225-83 / SGSC4696)).